Here is an 868-residue protein sequence, read N- to C-terminus: Protein translocase subunit SecA (868 aa).

Residues Gln-88, 106–110 (GEGKT), and Asp-509 each bind ATP. Residues 816–827 (NAENEPLNYNNQ) are compositionally biased toward polar residues. A disordered region spans residues 816–868 (NAENEPLNYNNQGEDENFTPEKKIPRNAPCPCGSGKKYKDCHGKSGPKKGIFA). Zn(2+)-binding residues include Cys-845, Cys-847, Cys-856, and His-857.

Belongs to the SecA family. Monomer and homodimer. Part of the essential Sec protein translocation apparatus which comprises SecA, SecYEG and auxiliary proteins SecDF-YajC and YidC. Zn(2+) serves as cofactor.

It is found in the cell inner membrane. Its subcellular location is the cytoplasm. It catalyses the reaction ATP + H2O + cellular proteinSide 1 = ADP + phosphate + cellular proteinSide 2.. Its function is as follows. Part of the Sec protein translocase complex. Interacts with the SecYEG preprotein conducting channel. Has a central role in coupling the hydrolysis of ATP to the transfer of proteins into and across the cell membrane, serving as an ATP-driven molecular motor driving the stepwise translocation of polypeptide chains across the membrane. This Campylobacter concisus (strain 13826) protein is Protein translocase subunit SecA.